The chain runs to 201 residues: ATP-dependent Clp protease proteolytic subunit (201 aa).

S100 serves as the catalytic Nucleophile. The active site involves H125.

This sequence belongs to the peptidase S14 family. Component of the chloroplastic Clp protease core complex.

It localises to the plastid. It is found in the chloroplast stroma. The enzyme catalyses Hydrolysis of proteins to small peptides in the presence of ATP and magnesium. alpha-casein is the usual test substrate. In the absence of ATP, only oligopeptides shorter than five residues are hydrolyzed (such as succinyl-Leu-Tyr-|-NHMec, and Leu-Tyr-Leu-|-Tyr-Trp, in which cleavage of the -Tyr-|-Leu- and -Tyr-|-Trp bonds also occurs).. In terms of biological role, cleaves peptides in various proteins in a process that requires ATP hydrolysis. Has a chymotrypsin-like activity. Plays a major role in the degradation of misfolded proteins. The protein is ATP-dependent Clp protease proteolytic subunit of Chloranthus spicatus (Chulantree).